The sequence spans 107 residues: Nucleoid-associated protein BLi00029/BL02358 (107 aa).

A disordered region spans residues 1 to 27 (MRGGMGNMQKMMKQMQKMQKDMQKAQE). The segment covering 8 to 17 (MQKMMKQMQK) has biased composition (low complexity). Residues 18–27 (MQKDMQKAQE) show a composition bias toward basic and acidic residues.

It belongs to the YbaB/EbfC family. In terms of assembly, homodimer.

The protein resides in the cytoplasm. It is found in the nucleoid. Functionally, binds to DNA and alters its conformation. May be involved in regulation of gene expression, nucleoid organization and DNA protection. The sequence is that of Nucleoid-associated protein BLi00029/BL02358 from Bacillus licheniformis (strain ATCC 14580 / DSM 13 / JCM 2505 / CCUG 7422 / NBRC 12200 / NCIMB 9375 / NCTC 10341 / NRRL NRS-1264 / Gibson 46).